The following is a 1390-amino-acid chain: MNAITKSFTGRKRIRKSFGRIPEIAPMPNLIDVQRASYEAFLQMNVSPDSRQDAGLQEVFRSVFPINDFAGRGRLDFMSYEFEDPKYDVEECIQRGLTYAAPLKVILRLTTWDIDEDTGSRSIHDMKEQPVYMGDMPLMTDNGTFIINGTERVIVSQMHRSPGVFFDHDKGKTHSSGKYLFAARVIPYRGSWLDFEFDAKDLIYVRIDRKRKLPVTTLLYALEGANYLAQREQKIAEGGDVEGLDIRGMDQDEILSYFYEAVPFTRLGGEWARPFDPDAFRGLKLLSPLVDADTGEVVAEADAKLTARMVRKIAEKTRVVQVGRLDILGRFLAYDLVNENTGEIYGEAGEELTEDRLAALEEMGITELPLLSVDGSHGPWIRNTLAADKNSCRDEALIDIYRIMRPGEPPTKETAEAMFHGLFFDQGRYDLSAVGRVKMNMRLDVDAPDTLRVLRKEDILRTIKIMCELKDGRGQIDDIDNLGNRRVRSVGELMENQYRVGLLRMERAIRERMGSVDIDTVMPHDLINAKPAAAAVREFFGSSQLSQFMDQTNPLSEVTHKRRLSALGPGGLTRERAGFEVRDVHPTHYGRICPIETAGRPNIGLINSLSTYAKVNKYGFIETPYRLVEEGVLQDGWKYLSAMEEEKLVVAQADAKQDDQGRLTDELVSVRRSGDFRVVPPDQVTACDVSPKQLVSVAAALIPFLENDDANRALMGANMQRQAVPLVKADAPLVGTGMEAAVAHDSGATIVAKRRGVIDQIDGARIVVRATDEAGATQGVDIYRLRKYMRSNQSTCINQRPLVKVGDTVHAGDIIADGPSTELGELALGRNVLVAFMPWNGYNFEDSILISERIARDDVFTSIHIEEFEVMARDTKLGQEEITRDIPNVGEEALRNLDEAGIVYVGAEVNPGDILVGKVTPKGESPMTPEEKLLRAIFGEKASDVRDTSLKLPPGTTGTIVDVRVFSRRGVDKDERAMAIERAEIERLTKDRDDERGIQERSFYNRLRERLIGQTAGAGFKGIRSGTPITEEVLDEHHRATWASITVTSDEVMAELEKLRGEFKEATRRIDARFDSKVEKLQRGDELPPGVMKMVKVFVAVKRKLQPGDKMAGRHGNKGVVSRVVPVEDMPFLENGQAVDIVLNPLGVPSRMNIGQILETHLGWACANIGASIGDMVDEYQRTGERKQELLDRLHEVYGDVIFNEDVATLPNEQLIELANNLRKGLPIATPVFDGASIPDIEEMLEKAGVNKSGQSQLIDGRTGEPFERQTTVGYIYMLKLHHLVDDKIHARSIGPYSLVTQQPLGGKAQFGGQRFGEMEVWALEAYGAAYTLQEMLTVKSDDVSGRTKVYEAIVREQDDFEAGIPESFNVLIKELKSLGLNVELEQSGL.

It belongs to the RNA polymerase beta chain family. The RNAP catalytic core consists of 2 alpha, 1 beta, 1 beta' and 1 omega subunit. When a sigma factor is associated with the core the holoenzyme is formed, which can initiate transcription.

It catalyses the reaction RNA(n) + a ribonucleoside 5'-triphosphate = RNA(n+1) + diphosphate. DNA-dependent RNA polymerase catalyzes the transcription of DNA into RNA using the four ribonucleoside triphosphates as substrates. This Gluconobacter oxydans (strain 621H) (Gluconobacter suboxydans) protein is DNA-directed RNA polymerase subunit beta.